The sequence spans 855 residues: DNA polymerase (855 aa).

Positions 107 to 332 constitute a 3'-5' exonuclease domain; that stretch reads KPEMKPVFDA…LHNFFLPKIE (226 aa). The segment at 333-833 is polymerase; sequence KNEKLCSLYY…MDKEHPDHSK (501 aa).

Belongs to the DNA polymerase type-A family. As to quaternary structure, single-chain monomer with multiple functions.

It carries out the reaction DNA(n) + a 2'-deoxyribonucleoside 5'-triphosphate = DNA(n+1) + diphosphate. Replicates the viral genomic DNA. This polymerase possesses two enzymatic activities: DNA synthesis (polymerase) and an exonucleolytic activity that degrades single-stranded DNA in the 3'-5' direction for proofreading purpose. The DNA synthesis very likely occurs by strand displacement. The chain is DNA polymerase from Escherichia phage T5 (Enterobacteria phage T5).